The primary structure comprises 405 residues: Formin-like protein 15a (405 aa).

Residues 1–31 (MSLVEISGSDAMAAPMPGRVPPPPPRPPPMP) are disordered. The segment covering 18–31 (GRVPPPPPRPPPMP) has biased composition (pro residues). Residues 52-405 (FPRPAKKRAS…VCWFFVRLMI (354 aa)) enclose the FH2 domain.

It belongs to the formin-like family. Class-II subfamily.

The sequence is that of Formin-like protein 15a (FH15A) from Arabidopsis thaliana (Mouse-ear cress).